The sequence spans 691 residues: CREB-regulated transcription coactivator 2 (691 aa).

Polar residues predominate over residues 1 to 20; it reads MATSGANGPGSATASASNPR. The tract at residues 1–30 is disordered; it reads MATSGANGPGSATASASNPRKFSEKIALQK. An N-acetylalanine modification is found at A2. R51 bears the Asymmetric dimethylarginine; by PRMT6 mark. Residues S70, S86, and S90 each carry the phosphoserine modification. R99, R120, and R123 each carry asymmetric dimethylarginine; by PRMT6. At S136 the chain carries Phosphoserine. Asymmetric dimethylarginine; by PRMT6 occurs at positions 161 and 168. T169 bears the Phosphothreonine mark. S171 bears the Phosphoserine; by AMPK, MARK2, SIK1 and SIK2 mark. Positions 174–186 are enriched in polar residues; that stretch reads ALHTSVMNPNPQD. The disordered stretch occupies residues 174 to 195; sequence ALHTSVMNPNPQDTYPGPTPPS. Position 192 is a phosphothreonine (T192). K234 is covalently cross-linked (Glycyl lysine isopeptide (Lys-Gly) (interchain with G-Cter in SUMO2)). The Nuclear export signal signature appears at 271 to 287; that stretch reads TGGSLPDLTNLHFPPPL. At S274 the chain carries Phosphoserine; by MARK2. Disordered stretches follow at residues 280 to 306 and 335 to 491; these read NLHFPPPLPTPLDPEETVYPSLSGGNS and HSPL…YSPP. Phosphoserine occurs at positions 306, 368, 393, 433, and 456. Low complexity-rich tracts occupy residues 335–383 and 390–411; these read HSPL…HALP and PSLSAPALSSSSSSSSTSSPVL. A compositionally biased stretch (polar residues) spans 447-468; the sequence is SQQQLPKQFSPTMSPTLSSITQ. Phosphotyrosine is present on Y488. A phosphoserine mark is found at S489 and S492. Residue T501 is modified to Phosphothreonine. A disordered region spans residues 513–543; it reads CLVQPSGGQPPGRQPHYGTLYPPGSSGHGQQ. S611, S621, and S622 each carry phosphoserine.

This sequence belongs to the TORC family. Binds, as a tetramer, through its N-terminal region, with the bZIP domain of CREB1. 'Arg-314' in the bZIP domain of CREB1 is essential for this interaction. Interaction, via its C-terminal, with TAF4, enhances recruitment of TAF4 to CREB1. Interacts with SIK2. Interacts with 14-3-3 proteins, YWHAB and YWHAG. Interacts (probably when phosphorylated at Ser-171) with YWHAE. Interacts with calmodulin-dependent catalytic subunit PPP3CA/calcineurin A. Interaction with COP1 mediates nuclear export and degradation of CRTC2. Post-translationally, phosphorylation/dephosphorylation states of Ser-171 are required for regulating transduction of CREB activity. CRTCs/TORCs are inactive when phosphorylated, and active when dephosphorylated at this site. This primary site of phosphorylation, is regulated by cAMP and calcium levels and is dependent on the phosphorylation of SIKs (SIK1 and SIK2) by LKB1. Following adenylyl cyclase activation, dephosphorylated at Ser-171 by PPP3CA/calcineurin A resulting in CRTC2 dissociation from 14-3-3 proteins and PPP3CA. Both insulin and AMPK increase this phosphorylation of CRTC2 while glucagon suppresses it. Phosphorylation at Ser-274 by MARK2 is induced under low glucose conditions and dephosphorylated in response to glucose influx. Phosphorylation at Ser-274 promotes interaction with 14-3-3 proteins and translocation to the cytoplasm. Asymmetric dimethylation of arginine resisues by PRMT6 enhances the association of CRTC2 with CREB on the promoters of gluconeogenic genes.

The protein resides in the cytoplasm. It localises to the nucleus. Its function is as follows. Transcriptional coactivator for CREB1 which activates transcription through both consensus and variant cAMP response element (CRE) sites. Acts as a coactivator, in the SIK/TORC signaling pathway, being active when dephosphorylated and acts independently of CREB1 'Ser-133' phosphorylation. Enhances the interaction of CREB1 with TAF4. Regulates gluconeogenesis as a component of the LKB1/AMPK/TORC2 signaling pathway. Regulates the expression of specific genes such as the steroidogenic gene, StAR. Potent coactivator of PPARGC1A and inducer of mitochondrial biogenesis in muscle cells. The polypeptide is CREB-regulated transcription coactivator 2 (Crtc2) (Rattus norvegicus (Rat)).